A 518-amino-acid polypeptide reads, in one-letter code: Laccase (518 aa).

A signal peptide spans 1-21 (MSRFQSLLSFVLVSLAAVANA). Plastocyanin-like domains lie at 23–148 (IGPV…FVVY) and 160–302 (IDND…ILRY). N-linked (GlcNAc...) asparagine glycans are attached at residues Asn72 and Asn75. Residues His85, His87, His130, and His132 each contribute to the Cu cation site. Disulfide bonds link Cys106-Cys507 and Cys138-Cys226. Asn229 carries an N-linked (GlcNAc...) asparagine glycan. Residues 308 to 330 (VEPTTTQTTSTKPLNEADLHPLT) form a disordered region. 3 N-linked (GlcNAc...) asparagine glycosylation sites follow: Asn354, Asn362, and Asn398. The Plastocyanin-like 3 domain occupies 369–489 (SVPVLLQILS…AGFAVVLAED (121 aa)). Cu cation is bound by residues His416, His419, His421, His471, Cys472, His473, and His477.

Belongs to the multicopper oxidase family. Cu cation is required as a cofactor.

The protein localises to the secreted. It carries out the reaction 4 hydroquinone + O2 = 4 benzosemiquinone + 2 H2O. Its function is as follows. Lignin degradation and detoxification of lignin-derived products. Cleaves the C-C and C-O bonds of some phenolic lignin model compounds (such as O- and P-quinols, aminophenols and phenylenediamine). May also be involved in synthesis of phenoxazinone pigments. The chain is Laccase (LCC3-1) from Pycnoporus cinnabarinus (Cinnabar-red polypore).